A 119-amino-acid polypeptide reads, in one-letter code: MFKKYDKKKLRKKRHLRVRKKIFGTSEVPRLSVYRSEKNIYAQIIDDIKGTTLVSASSVDKDFKGNGSNKEAAKVVGKMIADKAIEKGIKEVVFDRGGYIYHGRVQNLAEGAREGGLQF.

The protein belongs to the universal ribosomal protein uL18 family. In terms of assembly, part of the 50S ribosomal subunit; part of the 5S rRNA/L5/L18/L25 subcomplex. Contacts the 5S and 23S rRNAs.

In terms of biological role, this is one of the proteins that bind and probably mediate the attachment of the 5S RNA into the large ribosomal subunit, where it forms part of the central protuberance. The protein is Large ribosomal subunit protein uL18 of Clostridium kluyveri (strain ATCC 8527 / DSM 555 / NBRC 12016 / NCIMB 10680 / K1).